We begin with the raw amino-acid sequence, 247 residues long: 2,3-bisphosphoglycerate-dependent phosphoglycerate mutase (247 aa).

Residues Arg-8–Asn-15, Thr-21–Gly-22, Arg-60, Glu-87–Tyr-90, Lys-98, Arg-114–Arg-115, and Gly-183–Asn-184 contribute to the substrate site. His-9 (tele-phosphohistidine intermediate) is an active-site residue. Catalysis depends on Glu-87, which acts as the Proton donor/acceptor.

Belongs to the phosphoglycerate mutase family. BPG-dependent PGAM subfamily.

The catalysed reaction is (2R)-2-phosphoglycerate = (2R)-3-phosphoglycerate. It participates in carbohydrate degradation; glycolysis; pyruvate from D-glyceraldehyde 3-phosphate: step 3/5. In terms of biological role, catalyzes the interconversion of 2-phosphoglycerate and 3-phosphoglycerate. This chain is 2,3-bisphosphoglycerate-dependent phosphoglycerate mutase, found in Chlorobium limicola (strain DSM 245 / NBRC 103803 / 6330).